Reading from the N-terminus, the 145-residue chain is Probable inactive ribonuclease-like protein 12 (145 aa).

A signal peptide spans 1-19; it reads MVLMVVVFLLLLFWENELT.

Belongs to the pancreatic ribonuclease family.

The protein localises to the secreted. Its function is as follows. Does not exhibit any ribonuclease activity. The sequence is that of Probable inactive ribonuclease-like protein 12 (Rnase12) from Mus musculus (Mouse).